Reading from the N-terminus, the 453-residue chain is Phosphoglucosamine mutase (453 aa).

S109 functions as the Phosphoserine intermediate in the catalytic mechanism. Positions 109, 246, 248, and 250 each coordinate Mg(2+). S109 is modified (phosphoserine).

Belongs to the phosphohexose mutase family. Requires Mg(2+) as cofactor. Post-translationally, activated by phosphorylation.

It catalyses the reaction alpha-D-glucosamine 1-phosphate = D-glucosamine 6-phosphate. Functionally, catalyzes the conversion of glucosamine-6-phosphate to glucosamine-1-phosphate. In Leifsonia xyli subsp. xyli (strain CTCB07), this protein is Phosphoglucosamine mutase.